Here is a 245-residue protein sequence, read N- to C-terminus: Biosynthetic peptidoglycan transglycosylase (245 aa).

A helical transmembrane segment spans residues V20 to A42.

It belongs to the glycosyltransferase 51 family.

It localises to the cell inner membrane. It catalyses the reaction [GlcNAc-(1-&gt;4)-Mur2Ac(oyl-L-Ala-gamma-D-Glu-L-Lys-D-Ala-D-Ala)](n)-di-trans,octa-cis-undecaprenyl diphosphate + beta-D-GlcNAc-(1-&gt;4)-Mur2Ac(oyl-L-Ala-gamma-D-Glu-L-Lys-D-Ala-D-Ala)-di-trans,octa-cis-undecaprenyl diphosphate = [GlcNAc-(1-&gt;4)-Mur2Ac(oyl-L-Ala-gamma-D-Glu-L-Lys-D-Ala-D-Ala)](n+1)-di-trans,octa-cis-undecaprenyl diphosphate + di-trans,octa-cis-undecaprenyl diphosphate + H(+). It participates in cell wall biogenesis; peptidoglycan biosynthesis. Peptidoglycan polymerase that catalyzes glycan chain elongation from lipid-linked precursors. The chain is Biosynthetic peptidoglycan transglycosylase from Burkholderia ambifaria (strain ATCC BAA-244 / DSM 16087 / CCUG 44356 / LMG 19182 / AMMD) (Burkholderia cepacia (strain AMMD)).